Consider the following 474-residue polypeptide: MKRVLVLLLAVAFGHALERGRDYEKNKVCKEFSHLGKEDFTSLSLVLYSRKFPSGTFEQVSQLVKEVVSLTEACCAEGADPDCYDTRTSALSAKSCESNSPFPVHPGTAECCTKEGLERKLCMAALKHQPQEFPTYVEPTNDEICEAFRKDPKEYANQFMWEYSTNYGQAPLSLLVSYTKSYLSMVGSCCTSASPTVCFLKERLQLKHLSLLTTLSNRVCSQYAAYGEKKSRLSNLIKLAQKVPTADLEDVLPLAEDITNILSKCCESASEDCMAKELPEHTVKLCDNLSTKNSKFEDCCQEKTAMDVFVCTYFMPAAQLPELPDVELPTNKDVCDPGNTKVMDKYTFELSRRTHLPEVFLSKVLEPTLKSLGECCDVEDSTTCFNAKGPLLKKELSSFIDKGQELCADYSENTFTEYKKKLAERLKAKLPDATPTELAKLVNKHSDFASNCCSINSPPLYCDSEIDAELKNIL.

Residues 1 to 16 (MKRVLVLLLAVAFGHA) form the signal peptide. Albumin domains follow at residues 17–208 (LERG…QLKH), 209–394 (LSLL…LLKK), and 395–474 (ELSS…KNIL). 14 disulfides stabilise this stretch: Cys-29-Cys-75, Cys-74-Cys-83, Cys-96-Cys-112, Cys-111-Cys-122, Cys-145-Cys-190, Cys-189-Cys-198, Cys-220-Cys-266, Cys-265-Cys-273, Cys-286-Cys-300, Cys-299-Cys-311, Cys-335-Cys-376, Cys-375-Cys-384, Cys-407-Cys-453, and Cys-452-Cys-462.

The protein belongs to the ALB/AFP/VDB family. In terms of assembly, associates with membrane-bound immunoglobulin on the surface of B-lymphocytes and with IgG Fc receptor on the membranes of T-lymphocytes. Interacts with LRP2; the interaction is required for renal uptake of GC in complex with 25-hydroxyvitamin D3. Allele GC*1S is O-glycosylated at Thr-436. The trisaccharide sugar moiety can be modified by the successive removal of neuraminic acid and galactose leaving an O-mceeN-acetyl-galactosamine. This conversion is thought to produce a macrophage-activating factor (Gc-MAF). Only a minor proportion of plasma GC is O-glycosylated. The potential N-glycosylation site predicted at Asn-288 is thought to be nonglycosylated. In terms of tissue distribution, expressed in the liver. Found in plasma, ascites, cerebrospinal fluid and urine.

It is found in the secreted. Its function is as follows. Involved in vitamin D transport and storage, scavenging of extracellular G-actin, enhancement of the chemotactic activity of C5 alpha for neutrophils in inflammation and macrophage activation. The chain is Vitamin D-binding protein (GC) from Homo sapiens (Human).